The following is a 330-amino-acid chain: NADH-quinone oxidoreductase subunit H (330 aa).

Helical transmembrane passes span 11–31 (ILVAVLKAIVILLAVVVCGAL), 81–101 (FIFVLAPMIAFAAMLMAFAII), 114–134 (IGILFFFAMAGLSVYAVLFAG), 154–174 (ISYEVFLALALMGVVAQVGSF), 187–207 (LWFIIPQFFGFCTFFIAGVAV), 238–258 (FFVGEYVGIVTISALLVTLFF), 270–290 (QIPFFWFALKTAFFIMIFILL), and 309–329 (FCLPLTLINLLVTGALVLAAA).

It belongs to the complex I subunit 1 family. In terms of assembly, NDH-1 is composed of 13 different subunits. Subunits NuoA, H, J, K, L, M, N constitute the membrane sector of the complex.

It localises to the cell inner membrane. The catalysed reaction is a quinone + NADH + 5 H(+)(in) = a quinol + NAD(+) + 4 H(+)(out). In terms of biological role, NDH-1 shuttles electrons from NADH, via FMN and iron-sulfur (Fe-S) centers, to quinones in the respiratory chain. The immediate electron acceptor for the enzyme in this species is believed to be ubiquinone. Couples the redox reaction to proton translocation (for every two electrons transferred, four hydrogen ions are translocated across the cytoplasmic membrane), and thus conserves the redox energy in a proton gradient. This subunit may bind ubiquinone. The protein is NADH-quinone oxidoreductase subunit H of Ectopseudomonas mendocina (strain ymp) (Pseudomonas mendocina).